Consider the following 239-residue polypeptide: Large ribosomal subunit protein uL2 (239 aa).

Disordered stretches follow at residues 1–20 and 202–239; these read MGHRIKTQNRGRGGPTYRAP and FGGGGHQHTGRPKTVSRGTSPGRKVGSVAARRTGRRKR.

This sequence belongs to the universal ribosomal protein uL2 family. Part of the 50S ribosomal subunit. Forms a bridge to the 30S subunit in the 70S ribosome.

One of the primary rRNA binding proteins. Required for association of the 30S and 50S subunits to form the 70S ribosome, for tRNA binding and peptide bond formation. It has been suggested to have peptidyltransferase activity; this is somewhat controversial. Makes several contacts with the 16S rRNA in the 70S ribosome. The polypeptide is Large ribosomal subunit protein uL2 (Methanosphaerula palustris (strain ATCC BAA-1556 / DSM 19958 / E1-9c)).